Reading from the N-terminus, the 116-residue chain is Thioredoxin (116 aa).

A Thioredoxin domain is found at 2–113; it reads TDSEKSATIK…LLRELSDVVP (112 aa). A disulfide bridge connects residues cysteine 37 and cysteine 40.

Belongs to the thioredoxin family.

Functionally, participates in various redox reactions through the reversible oxidation of its active center dithiol to a disulfide and catalyzes dithiol-disulfide exchange reactions. In Mycobacterium bovis (strain ATCC BAA-935 / AF2122/97), this protein is Thioredoxin (trxA).